The sequence spans 268 residues: Unknown seed protein 30.1 (268 aa).

The N-terminal stretch at 1-22 is a signal peptide; the sequence is MEFAHLTVLSLFCLAFVGITAT. The BURP domain occupies 68 to 259; it reads LFFEHDLHPR…GNKAAAWVPN (192 aa).

The polypeptide is Unknown seed protein 30.1 (Vicia faba (Broad bean)).